The sequence spans 364 residues: Aminomethyltransferase (364 aa).

Belongs to the GcvT family. In terms of assembly, the glycine cleavage system is composed of four proteins: P, T, L and H.

The enzyme catalyses N(6)-[(R)-S(8)-aminomethyldihydrolipoyl]-L-lysyl-[protein] + (6S)-5,6,7,8-tetrahydrofolate = N(6)-[(R)-dihydrolipoyl]-L-lysyl-[protein] + (6R)-5,10-methylene-5,6,7,8-tetrahydrofolate + NH4(+). Its function is as follows. The glycine cleavage system catalyzes the degradation of glycine. The chain is Aminomethyltransferase from Proteus mirabilis (strain HI4320).